A 918-amino-acid chain; its full sequence is Alpha-scruin (918 aa).

Kelch repeat units follow at residues 82 to 133, 134 to 187, 188 to 235, 237 to 289, 291 to 341, and 342 to 390; these read VVLA…YFHR, RVYV…VMDE, RIFV…NNEG, IYVI…TQNK, IWIW…KTGA, and HVFI…AIPA. The segment at 398 to 427 is disordered; the sequence is EVPTSTPSSKAKPQPGSKPTSVKYKKQPDI. The IQ domain maps to 430–459; that stretch reads RNEAAKKVQRRWRRYIEQKSITKRMQQGDS. Kelch repeat units lie at residues 590–641, 642–695, 696–743, 745–795, 797–849, and 851–898; these read VIIG…YYRS, AIYI…VFND, VLYA…AHGG, IWLL…VCDN, IWLC…ALES, and LYIA…TIPP.

As to expression, sperm.

In terms of biological role, actin bundling protein found in the acrosomal sperm process. The protein is Alpha-scruin of Limulus polyphemus (Atlantic horseshoe crab).